Reading from the N-terminus, the 93-residue chain is Small ribosomal subunit protein uS19 (93 aa).

This sequence belongs to the universal ribosomal protein uS19 family.

In terms of biological role, protein S19 forms a complex with S13 that binds strongly to the 16S ribosomal RNA. The protein is Small ribosomal subunit protein uS19 of Campylobacter hominis (strain ATCC BAA-381 / DSM 21671 / CCUG 45161 / LMG 19568 / NCTC 13146 / CH001A).